A 515-amino-acid polypeptide reads, in one-letter code: Maturase K (515 aa).

This sequence belongs to the intron maturase 2 family. MatK subfamily.

The protein resides in the plastid. It is found in the chloroplast. Usually encoded in the trnK tRNA gene intron. Probably assists in splicing its own and other chloroplast group II introns. The sequence is that of Maturase K from Picea engelmannii (Engelmann's spruce).